A 363-amino-acid chain; its full sequence is 5-formaminoimidazole-4-carboxamide-1-(beta)-D-ribofuranosyl 5'-monophosphate synthetase (363 aa).

5-amino-1-(5-phospho-beta-D-ribosyl)imidazole-4-carboxamide contacts are provided by H29 and S96. One can recognise an ATP-grasp domain in the interval 118-354; it reads RDILRWEAER…IALEIKNAIK (237 aa). ATP contacts are provided by residues 148–210 and E232; that span reads PSEI…CNYC. N260 is a 5-amino-1-(5-phospho-beta-D-ribosyl)imidazole-4-carboxamide binding site. Positions 299 and 312 each coordinate Mg(2+).

It belongs to the phosphohexose mutase family. Requires Mg(2+) as cofactor. Mn(2+) serves as cofactor.

It carries out the reaction 5-amino-1-(5-phospho-beta-D-ribosyl)imidazole-4-carboxamide + formate + ATP = 5-formamido-1-(5-phospho-D-ribosyl)imidazole-4-carboxamide + ADP + phosphate. It functions in the pathway purine metabolism; IMP biosynthesis via de novo pathway; 5-formamido-1-(5-phospho-D-ribosyl)imidazole-4-carboxamide from 5-amino-1-(5-phospho-D-ribosyl)imidazole-4-carboxamide (formate route): step 1/1. Its function is as follows. Catalyzes the ATP- and formate-dependent formylation of 5-aminoimidazole-4-carboxamide-1-beta-d-ribofuranosyl 5'-monophosphate (AICAR) to 5-formaminoimidazole-4-carboxamide-1-beta-d-ribofuranosyl 5'-monophosphate (FAICAR) in the absence of folates. The chain is 5-formaminoimidazole-4-carboxamide-1-(beta)-D-ribofuranosyl 5'-monophosphate synthetase from Methanobrevibacter smithii (strain ATCC 35061 / DSM 861 / OCM 144 / PS).